The following is a 245-amino-acid chain: Enolase-phosphatase E1 (245 aa).

Mg(2+) contacts are provided by Asp-14 and Glu-16. Residues 141–142 (SS) and Lys-175 each bind substrate. A Mg(2+)-binding site is contributed by Asp-200.

This sequence belongs to the HAD-like hydrolase superfamily. MasA/MtnC family. Monomer. The cofactor is Mg(2+).

Its subcellular location is the cytoplasm. It is found in the nucleus. It catalyses the reaction 5-methylsulfanyl-2,3-dioxopentyl phosphate + H2O = 1,2-dihydroxy-5-(methylsulfanyl)pent-1-en-3-one + phosphate. The protein operates within amino-acid biosynthesis; L-methionine biosynthesis via salvage pathway; L-methionine from S-methyl-5-thio-alpha-D-ribose 1-phosphate: step 3/6. Its pathway is amino-acid biosynthesis; L-methionine biosynthesis via salvage pathway; L-methionine from S-methyl-5-thio-alpha-D-ribose 1-phosphate: step 4/6. In terms of biological role, bifunctional enzyme that catalyzes the enolization of 2,3-diketo-5-methylthiopentyl-1-phosphate (DK-MTP-1-P) into the intermediate 2-hydroxy-3-keto-5-methylthiopentenyl-1-phosphate (HK-MTPenyl-1-P), which is then dephosphorylated to form the acireductone 1,2-dihydroxy-3-keto-5-methylthiopentene (DHK-MTPene). The chain is Enolase-phosphatase E1 from Drosophila grimshawi (Hawaiian fruit fly).